Reading from the N-terminus, the 324-residue chain is MIEFQKPTIRCEELSPDNKYGRYVIEPLERGYGITVGNALRRTLLSSLPGAAVTAVKIDGVLHEFSTIPGVLEDVPEIILNLKGLAIKMSSPGPKVMYIEAQGECEVKAKDIKADADIEICNPDHHIATLNQDARLFMEITVNQGKGYVLAERNKQPNQPIGVIPVDSIYTPVVKVNYKVENTRVGQVTDYDKLTMEIWTNGTIRPDEALTVAAKILIEHFNLFTDLSNIPTKIETVVKQEPPKRNKLLDMTIEELELSVRSYNCLKRAGINTVEDLVNKTEEEMMKVRNLGKKSLEEVIQKLHSLGLSLKKSDSTPKEEEEEK.

Residues 1–228 (MIEFQKPTIR…EHFNLFTDLS (228 aa)) are alpha N-terminal domain (alpha-NTD). The tract at residues 245–324 (RNKLLDMTIE…STPKEEEEEK (80 aa)) is alpha C-terminal domain (alpha-CTD).

It belongs to the RNA polymerase alpha chain family. Homodimer. The RNAP catalytic core consists of 2 alpha, 1 beta, 1 beta' and 1 omega subunit. When a sigma factor is associated with the core the holoenzyme is formed, which can initiate transcription.

The catalysed reaction is RNA(n) + a ribonucleoside 5'-triphosphate = RNA(n+1) + diphosphate. In terms of biological role, DNA-dependent RNA polymerase catalyzes the transcription of DNA into RNA using the four ribonucleoside triphosphates as substrates. The chain is DNA-directed RNA polymerase subunit alpha from Caldicellulosiruptor bescii (strain ATCC BAA-1888 / DSM 6725 / KCTC 15123 / Z-1320) (Anaerocellum thermophilum).